The chain runs to 497 residues: Protein FAM114A2 (497 aa).

Positions 1–54 (MSDKDPPESPVVTGVASTLKDENCEPVEKPEDKSQPVVSTRKRPETKPSSDLEA) are disordered. Over residues 19-34 (LKDENCEPVEKPEDKS) the composition is skewed to basic and acidic residues. Serine 84 and serine 205 each carry phosphoserine. Positions 344–364 (VAEKEEGEKESEAGNTEEAQK) are disordered.

The protein belongs to the FAM114 family.

The protein is Protein FAM114A2 (Fam114a2) of Mus musculus (Mouse).